The chain runs to 1197 residues: Sensor protein EvgS (1197 aa).

The signal sequence occupies residues 1–21 (MKFLPYIFLLCCGLWSTISFA). The Cytoplasmic portion of the chain corresponds to 22-325 (DEDYIEYRGI…SMTDENGSVR (304 aa)). The helical transmembrane segment at 326 to 346 (GVMGDILNIITLQTGLNFSPI) threads the bilayer. At 347–537 (TVSHNIHAGT…TWDLYSEQFY (191 aa)) the chain is on the periplasmic side. The chain crosses the membrane as a helical span at residues 538 to 558 (IVTTLSVLLVGSSLLWGFYLL). Residues 559–1197 (RSVRRRKVIQ…EIAVFCQQNN (639 aa)) are Cytoplasmic-facing. The 221-residue stretch at 718-938 (TMSHEIRTPI…TFTITIPVEI (221 aa)) folds into the Histidine kinase domain. His721 bears the Phosphohistidine; by autocatalysis mark. In terms of domain architecture, Response regulatory spans 960–1074 (SILIADDHPT…VLKTHLSQLH (115 aa)). The residue at position 1009 (Asp1009) is a 4-aspartylphosphate. The HPt domain occupies 1098-1197 (DLQLMQEILM…EIAVFCQQNN (100 aa)). The residue at position 1137 (His1137) is a Phosphohistidine.

Post-translationally, activation requires a sequential transfer of a phosphate group from a His in the primary transmitter domain, to an Asp in the receiver domain and to a His in the secondary transmitter domain.

It localises to the cell inner membrane. The catalysed reaction is ATP + protein L-histidine = ADP + protein N-phospho-L-histidine.. Member of the two-component regulatory system EvgS/EvgA. Phosphorylates EvgA via a four-step phosphorelay in response to environmental signals. In Escherichia coli O157:H7, this protein is Sensor protein EvgS (evgS).